A 125-amino-acid polypeptide reads, in one-letter code: Glutaredoxin-C1 (125 aa).

Residues valine 19–alanine 119 form the Glutaredoxin domain. The cysteines at positions 39 and 42 are disulfide-linked.

This sequence belongs to the glutaredoxin family. CPYC subfamily.

It is found in the cytoplasm. Functionally, has a glutathione-disulfide oxidoreductase activity in the presence of NADPH and glutathione reductase. Reduces low molecular weight disulfides and proteins. The protein is Glutaredoxin-C1 (GRXC1) of Arabidopsis thaliana (Mouse-ear cress).